We begin with the raw amino-acid sequence, 751 residues long: Large T antigen (751 aa).

Met-1 carries the N-acetylmethionine; by host modification. The J domain occupies 12–75; it reads ALISLLDLEP…LYRVRLLLGP (64 aa). Positions 130–134 are binding to host RB1 protein and transforming activity; it reads LTCQE. Residues 133–143 show a composition bias toward acidic residues; sequence QEELSSSEDEF. The segment at 133 to 260 is disordered; that stretch reads QEELSSSEDE…PKKPPPTVSP (128 aa). Over residues 155 to 165 the composition is skewed to low complexity; it reads VSISSDSSSSS. The span at 219–232 shows a compositional bias: polar residues; sequence RESQSTFGSYFNST. Position 245 is a phosphoserine; by host (Ser-245). Position 249 is a phosphothreonine; by host (Thr-249). A Nuclear localization signal motif is present at residues 251–257; the sequence is PKKPPPT. Positions 264–380 form a DNA-binding region, T-ag OBD; the sequence is PTILRGFLSH…KENKPGLYHF (117 aa). The T-ag D1-type zinc finger occupies 389–483; sequence VKQIDWNFLT…RRLKVLESTR (95 aa). Cys-426, Cys-429, His-439, and His-443 together coordinate Zn(2+). Residues 522–682 form the SF3 helicase domain; it reads DFEMMLLDIL…DFLAKSLEEN (161 aa). Residue 548-555 participates in ATP binding; it reads GPVNSGKT.

Forms homohexamers in the presence of ATP. Interacts with host HDAC1. Interacts (via LXCXE domain) with host RB1; the interaction induces the aberrant dissociation of RB1-E2F1 complex thereby disrupting RB1's activity. Interacts (via LXCXE domain) with host pRB-related proteins RBL1 and RBL2. Interacts (via C-terminus) with host TOP1 and POLA1 allowing DNA replication. Interacts with host preinitiation complex components TBP, TFIIA and TFIID to regulate transcription initiation. The cofactor is Mg(2+). Post-translationally, phosphorylated on both serine and threonine residues. Small t antigen inhibits the dephosphorylation by the AC form of PP2A. O-Glycosylated near the C-terminal region. In terms of processing, acetylated by CBP in a TP53-dependent manner.

It is found in the host nucleus. The catalysed reaction is Couples ATP hydrolysis with the unwinding of duplex DNA by translocating in the 3'-5' direction.. The enzyme catalyses ATP + H2O = ADP + phosphate + H(+). Isoform large T antigen is a key early protein essential for both driving viral replication and inducing cellular transformation. Plays a role in viral genome replication by driving entry of quiescent cells into the cell cycle and by autoregulating the synthesis of viral early mRNA. Displays highly oncogenic activities by corrupting the host cellular checkpoint mechanisms that guard cell division and the transcription, replication, and repair of DNA. Participates in the modulation of cellular gene expression preceeding viral DNA replication. This step involves binding to host key cell cycle regulators retinoblastoma protein RB1/pRb and TP53. Induces the disassembly of host E2F1 transcription factors from RB1, thus promoting transcriptional activation of E2F1-regulated S-phase genes. Inhibits host TP53 binding to DNA, abrogating the ability of TP53 to stimulate gene expression. Plays the role of a TFIID-associated factor (TAF) in transcription initiation for all three RNA polymerases, by stabilizing the TBP-TFIIA complex on promoters. Initiates viral DNA replication and unwinding via interactions with the viral origin of replication. Binds two adjacent sites in the SV40 origin. The replication fork movement is facilitated by Large T antigen helicase activity. Has processive 3'-5' DNA helicase activity which requires a short 3' single-stranded region and ATP. Activates the transcription of viral late mRNA, through host TBP and TFIIA stabilization. Interferes with histone deacetylation mediated by HDAC1, leading to activation of transcription. The protein is Large T antigen of Mesocricetus auratus (Golden hamster).